The chain runs to 231 residues: MEESNLFETTLYDGELFLLPSHLQRMKASAKSLGYSWPGEQYIENKLREAVQDTSMARVRWELSKAGDVTVQIVPIQTLEKAPYTLILDKQPSSTEKNPSCINKMTNRAIYIEAMNRNDAQYSKAQDVLLYNHQGFVTEATIFNVAFHRNGQWITPSLKHGLLSGTMRKNLLENGSIHEDDKGLLQKDNLKNGEQVLLFNSFRKVCKGVLIIQPEKACELLKKKDSSEKLS.

It belongs to the class-IV pyridoxal-phosphate-dependent aminotransferase family. Pyridoxal 5'-phosphate is required as a cofactor.

It localises to the cytoplasm. It is found in the nucleus. The enzyme catalyses 4-amino-4-deoxychorismate = 4-aminobenzoate + pyruvate + H(+). The protein operates within cofactor biosynthesis; tetrahydrofolate biosynthesis; 4-aminobenzoate from chorismate: step 2/2. Functionally, converts 4-amino-4-deoxychorismate into 4-aminobenzoate (PABA) and pyruvate. The chain is Putative aminodeoxychorismate lyase from Schizosaccharomyces pombe (strain 972 / ATCC 24843) (Fission yeast).